The primary structure comprises 230 residues: MKYNSVIRKAIFLRRPNRFQAYVVLDDEELLVHVPNTGRCREILKEGCTVLLRKGTTPNRKTPYDLIAAYKGEVLINIDSQIPNKVVEEALINKKIEKLVNFNNISREKTFGNSRFDFKLQDDNENTYFLEVKGVTLEENGETRFPDAPTERGKKHILELIEIKKLGMGAGIIFLIQIDNVNKFSPNDETDPKFGEALRLAKKERVDIFAYNCKVTEEEIELLNPVEIVL.

Belongs to the SfsA family.

In Clostridium perfringens (strain ATCC 13124 / DSM 756 / JCM 1290 / NCIMB 6125 / NCTC 8237 / Type A), this protein is Sugar fermentation stimulation protein homolog.